The chain runs to 98 residues: MSCYDLCRPCGPTPLANSCNEPCVRQCQDSRVVIQPSPVVVTLPGPILSSFPQNTAVGSSTSAAVGSILSEEGVPISCGGFGISGLGSRFSGRRCLPC.

Ser-2 is subject to N-acetylserine.

This sequence belongs to the avian keratin family. As to quaternary structure, the avian keratins (F-ker, S-ker, C-ker and B-ker) are a complex mixture of very similar polypeptides.

This is Feather keratin 2 from Gallus gallus (Chicken).